Consider the following 361-residue polypeptide: Carbamoyl phosphate synthase small chain (361 aa).

Residues 1–173 (MRAALALEDG…SVREEYRFSD (173 aa)) are CPSase. L-glutamine-binding residues include Ser-45, Gly-225, and Gly-227. A Glutamine amidotransferase type-1 domain is found at 177–361 (EIVVIDCGVK…DEFLAMCREH (185 aa)). Cys-252 serves as the catalytic Nucleophile. L-glutamine is bound by residues Leu-253, Gln-256, Asn-294, Gly-296, and Phe-297. Active-site residues include His-337 and Glu-339.

This sequence belongs to the CarA family. Composed of two chains; the small (or glutamine) chain promotes the hydrolysis of glutamine to ammonia, which is used by the large (or ammonia) chain to synthesize carbamoyl phosphate. Tetramer of heterodimers (alpha,beta)4.

The catalysed reaction is hydrogencarbonate + L-glutamine + 2 ATP + H2O = carbamoyl phosphate + L-glutamate + 2 ADP + phosphate + 2 H(+). It carries out the reaction L-glutamine + H2O = L-glutamate + NH4(+). Its pathway is amino-acid biosynthesis; L-arginine biosynthesis; carbamoyl phosphate from bicarbonate: step 1/1. It participates in pyrimidine metabolism; UMP biosynthesis via de novo pathway; (S)-dihydroorotate from bicarbonate: step 1/3. Small subunit of the glutamine-dependent carbamoyl phosphate synthetase (CPSase). CPSase catalyzes the formation of carbamoyl phosphate from the ammonia moiety of glutamine, carbonate, and phosphate donated by ATP, constituting the first step of 2 biosynthetic pathways, one leading to arginine and/or urea and the other to pyrimidine nucleotides. The small subunit (glutamine amidotransferase) binds and cleaves glutamine to supply the large subunit with the substrate ammonia. The chain is Carbamoyl phosphate synthase small chain from Methanopyrus kandleri (strain AV19 / DSM 6324 / JCM 9639 / NBRC 100938).